The following is a 167-amino-acid chain: Ubiquitin-conjugating enzyme E2 15 (167 aa).

The region spanning 5–165 (ASEQLLRKQL…VRRLVRRSIE (161 aa)) is the UBC core domain. Cys-90 functions as the Glycyl thioester intermediate in the catalytic mechanism.

Belongs to the ubiquitin-conjugating enzyme family.

The catalysed reaction is S-ubiquitinyl-[E1 ubiquitin-activating enzyme]-L-cysteine + [E2 ubiquitin-conjugating enzyme]-L-cysteine = [E1 ubiquitin-activating enzyme]-L-cysteine + S-ubiquitinyl-[E2 ubiquitin-conjugating enzyme]-L-cysteine.. The protein operates within protein modification; protein ubiquitination. Its function is as follows. Catalyzes the covalent attachment of ubiquitin to other proteins. Has a role in the formation of chromatin structures that influence the localization of transcriptional silencing factors. This Schizosaccharomyces pombe (strain 972 / ATCC 24843) (Fission yeast) protein is Ubiquitin-conjugating enzyme E2 15 (ubc15).